The following is a 764-amino-acid chain: Acylamino-acid-releasing enzyme (764 aa).

Catalysis depends on charge relay system residues Ser618, Asp707, and His739.

It belongs to the peptidase S9C family. As to quaternary structure, homotetramer.

It is found in the cytoplasm. The protein localises to the nucleus. It catalyses the reaction Cleavage of an N-acetyl or N-formyl amino acid from the N-terminus of a polypeptide.. With respect to regulation, strongly inhibited by the serine protease inhibitor diisopropyl fluorophosphate. Its function is as follows. Catalyzes the hydrolysis of the N-terminal peptide bond of an N-acetylated peptide to generate an N-acetylated amino acid and a peptide with a free N-terminus. Can degrade the glycated RuBisCO (ribulose-1,5-bisphosphate carboxylase/oxygenase) protein but not the native protein. May be involved in the elimination of glycated proteins. Plays a homeostatic role in sustaining the cytoplasmic antioxidative system. May contribute to the elimination of the oxidized proteins in the cytoplasm. This is Acylamino-acid-releasing enzyme from Arabidopsis thaliana (Mouse-ear cress).